Reading from the N-terminus, the 326-residue chain is L-lactate dehydrogenase (326 aa).

Residues V20, D41, K46, Y71, and 85-86 (GA) contribute to the NAD(+) site. Substrate is bound by residues Q88 and R94. Residues S107, 124-126 (AAN), and S149 contribute to the NAD(+) site. Substrate is bound at residue 126–129 (NPVD). Residue 154–157 (DTAR) coordinates substrate. Beta-D-fructose 1,6-bisphosphate-binding positions include R159, 171–174 (RSVH), and H174. H181 acts as the Proton acceptor in catalysis. Y226 carries the post-translational modification Phosphotyrosine. Residue T235 participates in substrate binding.

It belongs to the LDH/MDH superfamily. LDH family. In terms of assembly, homotetramer.

Its subcellular location is the cytoplasm. The catalysed reaction is (S)-lactate + NAD(+) = pyruvate + NADH + H(+). Its pathway is fermentation; pyruvate fermentation to lactate; (S)-lactate from pyruvate: step 1/1. Its activity is regulated as follows. Allosterically activated by fructose 1,6-bisphosphate (FBP) alone under acidic conditions, while it requires additional activation factors such as divalent cations (Mn(2+)) under neutral conditions. Under acidic conditions, Mn(2+) is an inhibitor in the absence of fructose 1,6-bisphosphate (FBP). In case of L.casei, L-LDH binds four fructose 1,6-bisphosphate (FBP) molecules per tetramer, while usual allosteric L-LDH binds only two fructose 1,6-bisphosphate (FBP) molecules per tetramer. Functionally, catalyzes the conversion of lactate to pyruvate. The polypeptide is L-lactate dehydrogenase (Lacticaseibacillus casei (Lactobacillus casei)).